The primary structure comprises 1263 residues: DNA-directed RNA polymerase subunit beta (1263 aa).

This sequence belongs to the RNA polymerase beta chain family. In terms of assembly, the RNAP catalytic core consists of 2 alpha, 1 beta, 1 beta' and 1 omega subunit. When a sigma factor is associated with the core the holoenzyme is formed, which can initiate transcription.

It catalyses the reaction RNA(n) + a ribonucleoside 5'-triphosphate = RNA(n+1) + diphosphate. Its function is as follows. DNA-dependent RNA polymerase catalyzes the transcription of DNA into RNA using the four ribonucleoside triphosphates as substrates. This Thermotoga maritima (strain ATCC 43589 / DSM 3109 / JCM 10099 / NBRC 100826 / MSB8) protein is DNA-directed RNA polymerase subunit beta.